The chain runs to 166 residues: Sec-independent protein translocase protein TatB (166 aa).

A helical transmembrane segment spans residues 2–22; the sequence is FDGIGFMELLLIGVLGLVVLG. Positions 69 to 166 are disordered; sequence SKGLSNLSPE…DTRSNPKANG (98 aa). Composition is skewed to polar residues over residues 88-97 and 112-132; these read QAAQSVNRPY and QIYSPVASTVQTSPAQASQAN. Over residues 133–153 the composition is skewed to low complexity; sequence PTATVEASPAPASPATPSEPS. Residues 155 to 166 show a composition bias toward polar residues; the sequence is GADTRSNPKANG.

This sequence belongs to the TatB family. As to quaternary structure, the Tat system comprises two distinct complexes: a TatABC complex, containing multiple copies of TatA, TatB and TatC subunits, and a separate TatA complex, containing only TatA subunits. Substrates initially bind to the TatABC complex, which probably triggers association of the separate TatA complex to form the active translocon.

It is found in the cell inner membrane. Functionally, part of the twin-arginine translocation (Tat) system that transports large folded proteins containing a characteristic twin-arginine motif in their signal peptide across membranes. Together with TatC, TatB is part of a receptor directly interacting with Tat signal peptides. TatB may form an oligomeric binding site that transiently accommodates folded Tat precursor proteins before their translocation. This is Sec-independent protein translocase protein TatB from Shewanella baltica (strain OS155 / ATCC BAA-1091).